The chain runs to 318 residues: 2-desacetyl-2-hydroxyethyl bacteriochlorophyllide A dehydrogenase (318 aa).

It participates in porphyrin-containing compound metabolism; bacteriochlorophyll biosynthesis (light-independent). This protein catalyzes the penultimate step in bacteriochlorophyll a biosynthesis. The polypeptide is 2-desacetyl-2-hydroxyethyl bacteriochlorophyllide A dehydrogenase (bchC) (Cereibacter sphaeroides (strain ATCC 17023 / DSM 158 / JCM 6121 / CCUG 31486 / LMG 2827 / NBRC 12203 / NCIMB 8253 / ATH 2.4.1.) (Rhodobacter sphaeroides)).